Reading from the N-terminus, the 142-residue chain is Large ribosomal subunit protein uL11 (142 aa).

Belongs to the universal ribosomal protein uL11 family. As to quaternary structure, part of the ribosomal stalk of the 50S ribosomal subunit. Interacts with L10 and the large rRNA to form the base of the stalk. L10 forms an elongated spine to which L12 dimers bind in a sequential fashion forming a multimeric L10(L12)X complex. One or more lysine residues are methylated.

In terms of biological role, forms part of the ribosomal stalk which helps the ribosome interact with GTP-bound translation factors. The polypeptide is Large ribosomal subunit protein uL11 (Mycolicibacterium gilvum (strain PYR-GCK) (Mycobacterium gilvum (strain PYR-GCK))).